A 233-amino-acid polypeptide reads, in one-letter code: H-2 class II histocompatibility antigen, A-F alpha chain (233 aa).

Positions 1-88 are alpha-1; sequence EDDIEADHVG…KRSNFTPATN (88 aa). At 1–195 the chain is on the extracellular side; sequence EDDIEADHVG…IPAPMSELTE (195 aa). The alpha-2 stretch occupies residues 89 to 182; the sequence is EAPQATVFPK…GLEEPVLKHW (94 aa). The 93-residue stretch at 91 to 183 folds into the Ig-like C1-type domain; sequence PQATVFPKSP…LEEPVLKHWE (93 aa). A disulfide bridge links Cys-111 with Cys-167. The N-linked (GlcNAc...) asparagine glycan is linked to Asn-122. Residues 183 to 195 form a connecting peptide region; that stretch reads EPEIPAPMSELTE. Residues 196-221 form a helical membrane-spanning segment; sequence TVVCALGLSVGLVGIVVGTIFIIQGL. Topologically, residues 222 to 233 are cytoplasmic; the sequence is RSGGTSRHPGPL.

The protein belongs to the MHC class II family.

The protein localises to the membrane. The sequence is that of H-2 class II histocompatibility antigen, A-F alpha chain (H2-Aa) from Mus musculus (Mouse).